The primary structure comprises 2424 residues: Voltage-dependent P/Q-type calcium channel subunit alpha-1A (2424 aa).

Residues 1–98 (MARFGDEMPA…KYAKKITEWP (98 aa)) are Cytoplasmic-facing. The stretch at 85-363 (NVVRKYAKKI…LVLGVLSGEF (279 aa)) is one I repeat. Residues 99–117 (PFEYMILATIIANCIVLAL) form a helical membrane-spanning segment. Topologically, residues 118-135 (EQHLPDDDKTPMSERLDD) are extracellular. The helical transmembrane segment at 136-155 (TEPYFIGIFCFEAGIKIIAL) threads the bilayer. Over 156-167 (GFAFHKGSYLRN) the chain is Cytoplasmic. The helical transmembrane segment at 168 to 185 (GWNVMDFVVVLTGILATV) threads the bilayer. Residues 186–190 (GTEFD) are Extracellular-facing. Residues 191-209 (LRTLRAVRVLRPLKLVSGI) traverse the membrane as a helical segment. Residues 210-228 (PSLQVVLKSIMKAMIPLLQ) lie on the Cytoplasmic side of the membrane. Residues 229–248 (IGLLLFFAILIFAIIGLEFY) traverse the membrane as a helical segment. The Extracellular portion of the chain corresponds to 249–335 (MGKFHTTCFE…NSNDASGNTW (87 aa)). N-linked (GlcNAc...) asparagine glycosylation is present at Asn283. Glu318 is a binding site for Ca(2+). The helical transmembrane segment at 336-360 (NWLYFIPLIIIGSFFMLNLVLGVLS) threads the bilayer. The Cytoplasmic portion of the chain corresponds to 361-487 (GEFAKERERV…FYIRRMVKTQ (127 aa)). The tract at residues 383–400 (QQIERELNGYMEWISKAE) is binding to the beta subunit. Thr409 carries the phosphothreonine modification. Phosphoserine occurs at positions 448 and 451. Residues 473–717 (ERRMRFYIRR…VFLAIAVDNL (245 aa)) form an II repeat. Residues 488-506 (AFYWTVLSLVALNTLCVAI) form a helical membrane-spanning segment. Topologically, residues 507-521 (VHYNQPEWLSDFLYY) are extracellular. The helical transmembrane segment at 522-541 (AEFIFLGLFMSEMFIKMYGL) threads the bilayer. Topologically, residues 542–549 (GTRPYFHS) are cytoplasmic. A helical transmembrane segment spans residues 550–568 (SFNCFDCGVIIGSIFEVIW). Topologically, residues 569-578 (AVIKPGTSFG) are extracellular. Residues 579–597 (ISVLRALRLLRIFKVTKYW) form a helical membrane-spanning segment. The Cytoplasmic segment spans residues 598–616 (ASLRNLVVSLLNSMKSIIS). Residues 617 to 636 (LLFLLFLFIVVFALLGMQLF) form a helical membrane-spanning segment. The Extracellular portion of the chain corresponds to 637-689 (GGQFNFDEGTPPTNFDTFPAAIMTVFQILTGEDWNEVMYDGIKSQGGVQGGMV). Glu668 lines the Ca(2+) pocket. A helical transmembrane segment spans residues 690 to 714 (FSIYFIVLTLFGNYTLLNVFLAIAV). The Cytoplasmic segment spans residues 715-1253 (DNLANAQELT…RLCHYILNLR (539 aa)). Phosphoserine is present on residues Ser750, Ser753, and Ser790. Residues 819–1229 (HLDRPLVVDP…GEDGPKPMPP (411 aa)) are disordered. Composition is skewed to basic and acidic residues over residues 893–912 (ELSR…REGG), 922–931 (EAERGKAGDP), and 969–996 (RPGE…RSGE). Residues 1053 to 1065 (PNLSTTRPIQQDL) show a composition bias toward polar residues. A phosphoserine mark is found at Ser1091 and Ser1104. The segment covering 1110–1140 (SSTDPAGPTPATAANPQNSTASRRTPNNPGN) has biased composition (low complexity). Polar residues predominate over residues 1151 to 1168 (ENSLIVTNPSTAQTNSAK). Over residues 1204–1214 (LPKKEDEKKEE) the composition is skewed to basic and acidic residues. Residues 1240 to 1523 (NPLRRLCHYI…IFVALIIITF (284 aa)) form an III repeat. Residues 1254 to 1272 (YFEMCILMVIAMSSIALAA) form a helical membrane-spanning segment. The Extracellular segment spans residues 1273–1288 (EDPVQPNAPRNNVLRY). A helical membrane pass occupies residues 1289 to 1308 (FDYVFTGVFTFEMVIKMIDL). Residues 1309-1320 (GLVLHQGAYFRD) lie on the Cytoplasmic side of the membrane. The helical transmembrane segment at 1321 to 1339 (LWNILDFIVVSGALVAFAF) threads the bilayer. Residues 1340-1350 (TGNSKGKDINT) lie on the Extracellular side of the membrane. A helical membrane pass occupies residues 1351–1369 (IKSLRVLRVLRPLKTIKRL). The Cytoplasmic segment spans residues 1370–1388 (PKLKAVFDCVVNSLKNVFN). The chain crosses the membrane as a helical span at residues 1389-1408 (ILIVYMLFMFIFAVVAVQLF). Topologically, residues 1409-1495 (KGKFFHCTDE…QGPSPGYRME (87 aa)) are extracellular. A Ca(2+)-binding site is contributed by Glu1469. The chain crosses the membrane as a helical span at residues 1496 to 1520 (MSIFYVVYFVVFPFFFVNIFVALII). Residues 1521 to 1575 (ITFQEQGDKMMEEYSLEKNERACIDFAISAKPLTRHMPQNKQSFQYRMWQFVVSP) lie on the Cytoplasmic side of the membrane. An IV repeat occupies 1560–1823 (NKQSFQYRMW…LFVAVIMDNF (264 aa)). Residues 1576–1604 (PFEYTIMAMIALNTIVLMMKFYGASVAYD) form a helical membrane-spanning segment. The Extracellular portion of the chain corresponds to 1605–1609 (NALKV). The chain crosses the membrane as a helical span at residues 1610 to 1629 (FNIVFTSLFSLECLLKVLAF). Residues 1630–1637 (GILNYFRD) lie on the Cytoplasmic side of the membrane. Residues 1638–1656 (AWNIFDFVTVLGSITDILV) traverse the membrane as a helical segment. Residues 1657–1665 (TEFGNNFIN) lie on the Extracellular side of the membrane. N-linked (GlcNAc...) asparagine glycosylation occurs at Asn1665. A helical membrane pass occupies residues 1666-1684 (LSFLRLFRAARLIKLLRQG). Residues 1685-1703 (YTIRILLWTFVQSFKALPY) are Cytoplasmic-facing. A helical transmembrane segment spans residues 1704 to 1723 (VCLLIAMLFFIYAIIGMQVF). The Extracellular portion of the chain corresponds to 1724–1795 (GNIGIDMEDE…ILTPECGNEF (72 aa)). The chain crosses the membrane as a helical span at residues 1796–1820 (AYFYFVSFIFLCSFLMLNLFVAVIM). Residues 1821-2424 (DNFEYLTRDS…GGPRASAPSP (604 aa)) lie on the Cytoplasmic side of the membrane. Thr1993 carries the post-translational modification Phosphothreonine. Residues 1997–2424 (FQRMEPPPDE…GGPRASAPSP (428 aa)) form a disordered region. Positions 2037 to 2053 (SWVTQRAQEMFQKTGTW) are enriched in polar residues. Phosphoserine is present on residues Ser2054, Ser2072, Ser2084, Ser2086, Ser2127, and Ser2148. Residues 2074–2090 (EMREMSQDGYSDSEHCL) show a composition bias toward basic and acidic residues. Composition is skewed to basic and acidic residues over residues 2142–2159 (RRLD…ENQR) and 2200–2210 (PSREREQERGR). A compositionally biased stretch (basic residues) spans 2211-2229 (PKDRKHRPHHHHHHHHHPG). Low complexity predominate over residues 2249–2262 (VARVRPARAPALAH). Basic residues predominate over residues 2280 to 2305 (RRARRPRPRQRRRPRRRRGGGGRALR).

It belongs to the calcium channel alpha-1 subunit (TC 1.A.1.11) family. CACNA1A subfamily. Voltage-dependent calcium channels are multisubunit complexes, consisting of alpha-1, alpha-2, beta and delta subunits in a 1:1:1:1 ratio. The channel activity is directed by the pore-forming and voltage-sensitive alpha-1 subunit. In many cases, this subunit is sufficient to generate voltage-sensitive calcium channel activity. The auxiliary subunits beta and alpha-2/delta linked by a disulfide bridge regulate the channel activity. Interacts with CABP1. Interacts with the spider omega-agatoxin-IVA (AC P30288). Interacts with TSPOAP1. In terms of tissue distribution, brain specific. Purkinje cells contain predominantly P-type VSCC, the Q-type being a prominent calcium current in cerebellar granule cells.

It localises to the cell membrane. The enzyme catalyses Ca(2+)(in) = Ca(2+)(out). In terms of biological role, voltage-sensitive calcium channels (VSCC) mediate the entry of calcium ions into excitable cells and are also involved in a variety of calcium-dependent processes, including muscle contraction, hormone or neurotransmitter release, gene expression, cell motility, cell division and cell death. The isoform alpha-1A gives rise to P and/or Q-type calcium currents. P/Q-type calcium channels belong to the 'high-voltage activated' (HVA) group and are specifically blocked by the spider omega-agatoxin-IVA (AC P54282). They are however insensitive to dihydropyridines (DHP). This is Voltage-dependent P/Q-type calcium channel subunit alpha-1A (CACNA1A) from Oryctolagus cuniculus (Rabbit).